A 1171-amino-acid chain; its full sequence is Protein WWC2 (1171 aa).

2 WW domains span residues 9–42 (LPLP…DPRD) and 56–89 (NELP…DPRK). 3 coiled-coil regions span residues 120–193 (KEQR…YKEQ), 223–257 (ELKS…LEEA), and 301–420 (LAEK…KSAT). Disordered regions lie at residues 521–552 (SPTA…LSPP) and 603–637 (QALA…KNPD). Positions 534–551 (PKSVTSLSSLSSLSSLSP) are enriched in low complexity. Basic and acidic residues-rich tracts occupy residues 606 to 616 (AERKSTGEGLR) and 625 to 637 (GRTD…KNPD). One can recognise a C2 domain in the interval 684–806 (GAAQAQLILR…FSNDVHTQWY (123 aa)). 2 coiled-coil regions span residues 836-870 (LDLD…EQLC) and 1047-1123 (DLEL…NAEK).

The protein belongs to the WWC family.

It localises to the cytoplasm. Its subcellular location is the cytosol. In terms of biological role, negative regulator of the Hippo signaling pathway, also known as the Salvador-Warts-Hippo (SWH) pathway. This chain is Protein WWC2 (wwc2), found in Xenopus tropicalis (Western clawed frog).